Reading from the N-terminus, the 226-residue chain is Putative ankyrin repeat protein RF_0939 (226 aa).

ANK repeat units lie at residues 56-86 (VSTT…NVNM), 91-120 (FKDT…AVNG), 125-154 (LLGP…AVDQ), and 157-194 (SGET…DTNA).

The sequence is that of Putative ankyrin repeat protein RF_0939 from Rickettsia felis (strain ATCC VR-1525 / URRWXCal2) (Rickettsia azadi).